The following is a 717-amino-acid chain: F-box only protein 42 (717 aa).

Acidic residues predominate over residues 1-30 (MASSSDSEDDSFMAVDQEETVLEGTMEQDE). The segment at 1–47 (MASSSDSEDDSFMAVDQEETVLEGTMEQDEEPHPVLEAEETRHNRSM) is disordered. The segment covering 31-43 (EPHPVLEAEETRH) has biased composition (basic and acidic residues). The 50-residue stretch at 44–93 (NRSMSELPEEVLEYILSFLSPYQEHKTAALVCKQWYRLIKGVAHQCYHGF) folds into the F-box domain. 4 Kelch repeats span residues 132-184 (SMYV…VYKD), 186-242 (LVLF…VIDD), 244-293 (MIVF…VIDD), and 295-342 (TILI…LWCH). Disordered regions lie at residues 361–472 (RAPL…SAAE) and 508–539 (PASS…GVHT). The span at 363-376 (PLSPSLNSRPSPIS) shows a compositional bias: low complexity. S365 and S373 each carry phosphoserine. The residue at position 378 (T378) is a Phosphothreonine. Polar residues-rich tracts occupy residues 416 to 426 (QRQTPSGSREG) and 455 to 469 (SLDS…STPS). The residue at position 552 (S552) is a Phosphoserine. A compositionally biased stretch (low complexity) spans 570 to 596 (GPSASAALSPPLGSSPGSPGSQSLSSG). The tract at residues 570–635 (GPSASAALSP…PQSLNVGKPL (66 aa)) is disordered.

In terms of assembly, component of some SCF complex, composed of CUL1, SKP1, RBX1 and FBXO42. Interacts (via the kelch domain) with p53/TP53; interaction is direct.

Functionally, substrate-recognition component of some SCF (SKP1-CUL1-F-box protein)-type E3 ubiquitin ligase complex. Specifically recognizes p53/TP53, promoting its ubiquitination and degradation. This is F-box only protein 42 (FBXO42) from Pongo abelii (Sumatran orangutan).